The sequence spans 664 residues: Translation factor GUF1, mitochondrial (664 aa).

Residues 63–246 (SNYRNFSIVA…SIINNIPPPQ (184 aa)) form the tr-type G domain. GTP is bound by residues 72 to 79 (AHVDHGKS), 139 to 143 (DTPGH), and 193 to 196 (NKID).

It belongs to the TRAFAC class translation factor GTPase superfamily. Classic translation factor GTPase family. LepA subfamily.

The protein resides in the mitochondrion inner membrane. The catalysed reaction is GTP + H2O = GDP + phosphate + H(+). Promotes mitochondrial protein synthesis. May act as a fidelity factor of the translation reaction, by catalyzing a one-codon backward translocation of tRNAs on improperly translocated ribosomes. Binds to mitochondrial ribosomes in a GTP-dependent manner. The chain is Translation factor GUF1, mitochondrial from Clavispora lusitaniae (strain ATCC 42720) (Yeast).